Here is a 431-residue protein sequence, read N- to C-terminus: MSKNVVVIGTQWGDEGKGKIVDWLAESVQGVVRFQGGHNAGHTLWINGKKTILRLIPSGIMHPGVTCYIGNGVVLSPEALLKEIEELEAAGLDVRSRLQISEICPLILPYHVAVDKAREARKGESKIGTTGRGIGPAYEDKVARRALRVQDLFTPDIFDAKLDEVLDYHNFVLTQYLGAQAVSANEVRDQAMALAPAIKPMVRDVSSSIFLAQQQGARFLFEGAQGALLDVDHGTYPYVTSSNCVAGAASAGAGVGPQSLDYVLGITKAYTTRVGSGPFPTELLDEVGSRLATVGKEFGSVTGRPRRCGWFDGAALKRSVRLNGISGLCITKLDVLDGLEKLQLGVGYRVNGEFRDVLPYGAHAVAQAEPVLEELPGWSESTVGVTEYSKLPLNARRYLERVAEVCGVPIDLVSTGPDRNETIVLRHPLKG.

Residues 13 to 19 and 41 to 43 contribute to the GTP site; these read GDEGKGK and GHT. The Proton acceptor role is filled by D14. 2 residues coordinate Mg(2+): D14 and G41. IMP is bound by residues 14 to 17, 39 to 42, T130, R144, Q225, T240, and R304; these read DEGK and NAGH. H42 (proton donor) is an active-site residue. 300–306 is a substrate binding site; sequence SVTGRPR. Residues R306, 332–334, and 414–416 contribute to the GTP site; these read KLD and STG.

This sequence belongs to the adenylosuccinate synthetase family. Homodimer. It depends on Mg(2+) as a cofactor.

The protein resides in the cytoplasm. The enzyme catalyses IMP + L-aspartate + GTP = N(6)-(1,2-dicarboxyethyl)-AMP + GDP + phosphate + 2 H(+). Its pathway is purine metabolism; AMP biosynthesis via de novo pathway; AMP from IMP: step 1/2. Its function is as follows. Plays an important role in the de novo pathway of purine nucleotide biosynthesis. Catalyzes the first committed step in the biosynthesis of AMP from IMP. The protein is Adenylosuccinate synthetase of Bordetella avium (strain 197N).